A 516-amino-acid polypeptide reads, in one-letter code: Delta(24)-sterol reductase (516 aa).

The first 22 residues, 1-22, serve as a signal peptide directing secretion; that stretch reads MEPAVSLAVCALLFLLWVRVKG. The Lumenal portion of the chain corresponds to 23–31; sequence LEFVLIHQR. The helical transmembrane segment at 32-52 threads the bilayer; it reads WVFVCLFLLPLSLIFDIYYYV. Over 53 to 516 the chain is Cytoplasmic; sequence RAWVVFKLSS…YDKICKAARH (464 aa). In terms of domain architecture, FAD-binding PCMH-type spans 58–234; sequence FKLSSAPRLH…VAAEIRIIPA (177 aa). 163-175 contacts FAD; it reads TVGGLIMGTGIES.

Belongs to the FAD-binding oxidoreductase/transferase type 4 family. As to quaternary structure, interacts with DHCR7; this interaction regulates DHCR7 activity. It depends on FAD as a cofactor.

The protein resides in the endoplasmic reticulum membrane. Its subcellular location is the golgi apparatus membrane. It carries out the reaction cholesterol + NADP(+) = desmosterol + NADPH + H(+). It catalyses the reaction lanosterol + NADPH + H(+) = 24,25-dihydrolanosterol + NADP(+). The enzyme catalyses 5alpha-cholest-8-en-3beta-ol + NADP(+) = zymosterol + NADPH + H(+). It participates in steroid biosynthesis; cholesterol biosynthesis. In terms of biological role, catalyzes the reduction of the delta-24 double bond of sterol intermediates during cholesterol biosynthesis. In addition to its cholesterol-synthesizing activity, can protect cells from oxidative stress by reducing caspase 3 activity during apoptosis induced by oxidative stress. Also protects against amyloid-beta peptide-induced apoptosis. In Macaca fascicularis (Crab-eating macaque), this protein is Delta(24)-sterol reductase (DHCR24).